Consider the following 167-residue polypeptide: Ribosome maturation factor RimM (167 aa).

The PRC barrel domain occupies D92–Q166.

It belongs to the RimM family. In terms of assembly, binds ribosomal protein uS19.

Its subcellular location is the cytoplasm. Its function is as follows. An accessory protein needed during the final step in the assembly of 30S ribosomal subunit, possibly for assembly of the head region. Essential for efficient processing of 16S rRNA. May be needed both before and after RbfA during the maturation of 16S rRNA. It has affinity for free ribosomal 30S subunits but not for 70S ribosomes. The protein is Ribosome maturation factor RimM of Paracoccus denitrificans (strain Pd 1222).